Reading from the N-terminus, the 136-residue chain is MALTKQTARKSTGGKAPRKQLATKATRKSAPSTGGVKKPHRYRPGTVALREIRRYQKSTELLIRKLPFQRLVREIAQDFKTDLRFQSAAIGALQEASEAYLVGLFEDTNLCAIHAKRVTIMPKDIQLARRIRGERA.

Residues 1-10 (MALTKQTARK) show a composition bias toward polar residues. Residues 1 to 44 (MALTKQTARKSTGGKAPRKQLATKATRKSAPSTGGVKKPHRYRP) are disordered. Thr4 is modified (phosphothreonine; by HASPIN). Lys5 is subject to Allysine; alternate. Lys5 bears the N6,N6,N6-trimethyllysine; alternate mark. Lys5 bears the N6,N6-dimethyllysine; alternate mark. Position 5 is an N6-(2-hydroxyisobutyryl)lysine; alternate (Lys5). Lys5 carries the post-translational modification N6-(beta-hydroxybutyryl)lysine; alternate. Position 5 is an N6-acetyllysine; alternate (Lys5). N6-methyllysine; alternate is present on Lys5. At Gln6 the chain carries 5-glutamyl dopamine; alternate. 5-glutamyl serotonin; alternate is present on Gln6. Thr7 is subject to Phosphothreonine; by PKC. Arg9 carries the post-translational modification Citrulline; alternate. Residue Arg9 is modified to Symmetric dimethylarginine; by PRMT5; alternate. N6,N6,N6-trimethyllysine; alternate is present on Lys10. Residue Lys10 is modified to N6,N6-dimethyllysine; alternate. An N6-(2-hydroxyisobutyryl)lysine; alternate modification is found at Lys10. Residue Lys10 is modified to N6-(beta-hydroxybutyryl)lysine; alternate. N6-acetyllysine; alternate is present on Lys10. Lys10 carries the N6-methyllysine; alternate modification. Residue Lys10 is modified to N6-lactoyllysine; alternate. An ADP-ribosylserine; alternate modification is found at Ser11. A Phosphoserine; alternate; by AURKB, AURKC, RPS6KA3, RPS6KA4 and RPS6KA5 modification is found at Ser11. At Thr12 the chain carries Phosphothreonine; by PKC. Lys15 bears the N6-(2-hydroxyisobutyryl)lysine; alternate mark. The residue at position 15 (Lys15) is an N6-(beta-hydroxybutyryl)lysine; alternate. Position 15 is an N6-acetyllysine; alternate (Lys15). Lys15 carries the N6-lactoyllysine; alternate modification. Lys15 bears the N6-glutaryllysine; alternate mark. An N6-succinyllysine; alternate modification is found at Lys15. Arg18 is subject to Citrulline; alternate. The residue at position 18 (Arg18) is an Asymmetric dimethylarginine; by CARM1; alternate. 2 positions are modified to N6-(2-hydroxyisobutyryl)lysine; alternate: Lys19 and Lys24. N6-(beta-hydroxybutyryl)lysine; alternate is present on residues Lys19 and Lys24. N6-acetyllysine; alternate occurs at positions 19 and 24. N6-methyllysine; alternate is present on residues Lys19 and Lys24. N6-lactoyllysine; alternate is present on residues Lys19 and Lys24. N6-glutaryllysine; alternate occurs at positions 19 and 24. An N6-butyryllysine; alternate mark is found at Lys19 and Lys24. At Arg27 the chain carries Citrulline. N6,N6,N6-trimethyllysine; alternate is present on Lys28. Lys28 is modified (N6,N6-dimethyllysine; alternate). Position 28 is an N6-(2-hydroxyisobutyryl)lysine; alternate (Lys28). An N6-acetyllysine; alternate modification is found at Lys28. Lys28 is modified (N6-methyllysine; alternate). The residue at position 28 (Lys28) is an N6-lactoyllysine; alternate. Lys28 is modified (N6-glutaryllysine; alternate). At Ser29 the chain carries ADP-ribosylserine; alternate. Position 29 is a phosphoserine; alternate; by AURKB, AURKC and RPS6KA5 (Ser29). Position 32 is a phosphoserine (Ser32). Lys37 carries the post-translational modification N6,N6,N6-trimethyllysine; alternate. Lys37 carries the post-translational modification N6,N6-dimethyllysine; alternate. At Lys37 the chain carries N6-(2-hydroxyisobutyryl)lysine; alternate. Lys37 carries the N6-acetyllysine; alternate modification. Residue Lys37 is modified to N6-methyllysine; alternate. Lys38 carries the N6-methyllysine modification. Tyr42 is modified (phosphotyrosine). At Lys57 the chain carries N6,N6,N6-trimethyllysine; alternate. An N6-(2-hydroxyisobutyryl)lysine; alternate modification is found at Lys57. Lys57 bears the N6-(beta-hydroxybutyryl)lysine; alternate mark. Lys57 is subject to N6-acetyllysine; alternate. Position 57 is an N6-lactoyllysine; alternate (Lys57). The residue at position 57 (Lys57) is an N6-glutaryllysine; alternate. The residue at position 57 (Lys57) is an N6-succinyllysine; alternate. Lys57 is subject to N6-methyllysine; by EHMT2; alternate. Ser58 is modified (phosphoserine). 2 positions are modified to N6-(2-hydroxyisobutyryl)lysine; alternate: Lys65 and Lys80. N6-methyllysine; alternate is present on residues Lys65 and Lys80. An N6,N6,N6-trimethyllysine; alternate modification is found at Lys80. The residue at position 80 (Lys80) is an N6,N6-dimethyllysine; alternate. Lys80 carries the N6-acetyllysine; alternate modification. The residue at position 80 (Lys80) is an N6-lactoyllysine; alternate. N6-glutaryllysine; alternate is present on Lys80. Residue Lys80 is modified to N6-succinyllysine; alternate. A Phosphothreonine modification is found at Thr81. Position 87 is a phosphoserine (Ser87). Thr108 is subject to Phosphothreonine. N6-acetyllysine; alternate occurs at positions 116 and 123. N6-glutaryllysine; alternate occurs at positions 116 and 123. Lys123 is subject to N6-(2-hydroxyisobutyryl)lysine; alternate. The residue at position 123 (Lys123) is an N6-methyllysine; alternate. Lys123 bears the N6-succinyllysine; alternate mark.

Belongs to the histone H3 family. As to quaternary structure, the nucleosome is a histone octamer containing two molecules each of H2A, H2B, H3 and H4 assembled in one H3-H4 heterotetramer and two H2A-H2B heterodimers. The octamer wraps approximately 147 bp of DNA. In terms of processing, acetylation is generally linked to gene activation. Acetylation on Lys-10 (H3K9ac) impairs methylation at Arg-9 (H3R8me2s). Acetylation on Lys-19 (H3K18ac) and Lys-24 (H3K24ac) favors methylation at Arg-18 (H3R17me). Acetylation at Lys-123 (H3K122ac) by EP300/p300 plays a central role in chromatin structure: localizes at the surface of the histone octamer and stimulates transcription, possibly by promoting nucleosome instability. Post-translationally, citrullination at Arg-9 (H3R8ci) and/or Arg-18 (H3R17ci) by PADI4 impairs methylation and represses transcription. Butyrylation of histones marks active promoters and competes with histone acetylation. It is present during late spermatogenesis. In terms of processing, asymmetric dimethylation at Arg-18 (H3R17me2a) by CARM1 is linked to gene activation. Symmetric dimethylation at Arg-9 (H3R8me2s) by PRMT5 is linked to gene repression. Post-translationally, methylation at Lys-5 (H3K4me), Lys-37 and Lys-80 are linked to gene activation. Methylation at Lys-5 (H3K4me) facilitates subsequent acetylation of H3 and H4. Methylation at Lys-80 is associated with DNA double-strand break (DSB) responses and is a specific target for TP53BP1. Methylation at Lys-10 (H3K9me) and Lys-28 (H3K27me) are linked to gene repression. Methylation at Lys-10 (H3K9me) is a specific target for HP1 proteins (CBX1, CBX3 and CBX5) and prevents subsequent phosphorylation at Ser-11 (H3S10ph) and acetylation of H3 and H4. Methylation at Lys-5 (H3K4me) and Lys-80 require preliminary monoubiquitination of H2B at 'Lys-120'. Methylation at Lys-10 (H3K9me) and Lys-28 (H3K27me) are enriched in inactive X chromosome chromatin. Monomethylation at Lys-57 (H3K56me1) by EHMT2/G9A in G1 phase promotes interaction with PCNA and is required for DNA replication. Phosphorylated at Thr-4 (H3T3ph) by HASPIN during prophase and dephosphorylated during anaphase. Phosphorylation at Ser-11 (H3S10ph) by AURKB is crucial for chromosome condensation and cell-cycle progression during mitosis and meiosis. In addition phosphorylation at Ser-11 (H3S10ph) by RPS6KA4 and RPS6KA5 is important during interphase because it enables the transcription of genes following external stimulation, like mitogens, stress, growth factors or UV irradiation and result in the activation of genes, such as c-fos and c-jun. Phosphorylation at Ser-11 (H3S10ph), which is linked to gene activation, prevents methylation at Lys-10 (H3K9me) but facilitates acetylation of H3 and H4. Phosphorylation at Ser-11 (H3S10ph) by AURKB mediates the dissociation of HP1 proteins (CBX1, CBX3 and CBX5) from heterochromatin. Phosphorylation at Ser-11 (H3S10ph) is also an essential regulatory mechanism for neoplastic cell transformation. Phosphorylated at Ser-29 (H3S28ph) by MAP3K20 isoform 1, RPS6KA5 or AURKB during mitosis or upon ultraviolet B irradiation. Phosphorylation at Thr-7 (H3T6ph) by PRKCB is a specific tag for epigenetic transcriptional activation that prevents demethylation of Lys-5 (H3K4me) by LSD1/KDM1A. At centromeres, specifically phosphorylated at Thr-12 (H3T11ph) from prophase to early anaphase, by DAPK3 and PKN1. Phosphorylation at Thr-12 (H3T11ph) by PKN1 or isoform M2 of PKM (PKM2) is a specific tag for epigenetic transcriptional activation that promotes demethylation of Lys-10 (H3K9me) by KDM4C/JMJD2C. Phosphorylation at Tyr-42 (H3Y41ph) by JAK2 promotes exclusion of CBX5 (HP1 alpha) from chromatin. In terms of processing, lysine deamination at Lys-5 (H3K4all) to form allysine is mediated by LOXL2. Allysine formation by LOXL2 only takes place on H3K4me3 and results in gene repression. Post-translationally, succinylation at Lys-80 (H3K79succ) by KAT2A takes place with a maximum frequency around the transcription start sites of genes. It gives a specific tag for epigenetic transcription activation. Desuccinylation at Lys-123 (H3K122succ) by SIRT7 in response to DNA damage promotes chromatin condensation and double-strand breaks (DSBs) repair. Serine ADP-ribosylation constitutes the primary form of ADP-ribosylation of proteins in response to DNA damage. Serine ADP-ribosylation at Ser-11 (H3S10ADPr) is mutually exclusive with phosphorylation at Ser-11 (H3S10ph) and impairs acetylation at Lys-10 (H3K9ac).

It localises to the nucleus. It is found in the chromosome. Core component of nucleosome. Nucleosomes wrap and compact DNA into chromatin, limiting DNA accessibility to the cellular machineries which require DNA as a template. Histones thereby play a central role in transcription regulation, DNA repair, DNA replication and chromosomal stability. DNA accessibility is regulated via a complex set of post-translational modifications of histones, also called histone code, and nucleosome remodeling. The chain is Histone H3.3C from Mus musculus (Mouse).